Consider the following 4318-residue polypeptide: Cytoplasmic dynein 2 heavy chain 1 (4318 aa).

The stem stretch occupies residues 1–1658 (MPAEDARKEY…IMRMVDAEFQ (1658 aa)). 147–154 (LKSLVRKQ) serves as a coordination point for ATP. 2 coiled-coil regions span residues 1328–1354 (DKAT…QRKW) and 1402–1431 (LRTT…RSIL). AAA regions lie at residues 1659–1883 (YTYE…VLRG), 1951–2171 (DAIR…RQGD), 2261–2515 (ASDF…WVLG), and 2623–2871 (TFAR…SSSV). An ATP-binding site is contributed by 1697 to 1704 (GPAGTGKT). Residues 1959 to 1986 (EHNLVVMETQVKKALELYEQLRQRMGVV) are a coiled coil. ATP is bound by residues 1989–1996 (GPSGSGKS), 2301–2308 (GPDGCGKG), and 2661–2668 (GRSGVGRR). Residues 2888 to 3176 (DVYRRKKQGV…YELEKEQETI (289 aa)) form a stalk region. 2 coiled-coil regions span residues 2908-2989 (VAKL…AEIE) and 3423-3480 (QHEK…KTKE). AAA stretches follow at residues 3251-3487 (LSTE…TITQ) and 3699-3914 (MTFF…IIDR).

Belongs to the dynein heavy chain family. The cytoplasmic dynein complex 2 is probably composed by a heavy chain DYH1B homodimer and a number of light intermediate chains.

The protein localises to the cytoplasm. It localises to the cytoskeleton. Its subcellular location is the cilium axoneme. It is found in the cell membrane. May function as a motor for intraflagellar retrograde transport. Functions in cilia biogenesis. This Tripneustes gratilla (Hawaian sea urchin) protein is Cytoplasmic dynein 2 heavy chain 1 (DYH1B).